Reading from the N-terminus, the 644-residue chain is Arginine--tRNA ligase (644 aa).

Positions 129 to 139 (ANPIHPLHLGH) match the 'HIGH' region motif.

It belongs to the class-I aminoacyl-tRNA synthetase family.

It localises to the cytoplasm. The enzyme catalyses tRNA(Arg) + L-arginine + ATP = L-arginyl-tRNA(Arg) + AMP + diphosphate. This is Arginine--tRNA ligase (argS) from Aeropyrum pernix (strain ATCC 700893 / DSM 11879 / JCM 9820 / NBRC 100138 / K1).